The chain runs to 298 residues: Bifunctional protein FolD (298 aa).

NADP(+)-binding positions include 167–169 (GRS), Ser192, and Val233.

Belongs to the tetrahydrofolate dehydrogenase/cyclohydrolase family. Homodimer.

It carries out the reaction (6R)-5,10-methylene-5,6,7,8-tetrahydrofolate + NADP(+) = (6R)-5,10-methenyltetrahydrofolate + NADPH. The enzyme catalyses (6R)-5,10-methenyltetrahydrofolate + H2O = (6R)-10-formyltetrahydrofolate + H(+). The protein operates within one-carbon metabolism; tetrahydrofolate interconversion. Its function is as follows. Catalyzes the oxidation of 5,10-methylenetetrahydrofolate to 5,10-methenyltetrahydrofolate and then the hydrolysis of 5,10-methenyltetrahydrofolate to 10-formyltetrahydrofolate. The protein is Bifunctional protein FolD of Chelativorans sp. (strain BNC1).